The sequence spans 453 residues: Cysteine--tRNA ligase (453 aa).

C30 provides a ligand contact to Zn(2+). The short motif at 32–42 (PTVYDRAHLGN) is the 'HIGH' region element. Positions 212, 237, and 241 each coordinate Zn(2+). The 'KMSKS' region signature appears at 268-272 (KMSKS). Residue K271 coordinates ATP.

The protein belongs to the class-I aminoacyl-tRNA synthetase family. Monomer. The cofactor is Zn(2+).

It localises to the cytoplasm. The enzyme catalyses tRNA(Cys) + L-cysteine + ATP = L-cysteinyl-tRNA(Cys) + AMP + diphosphate. The polypeptide is Cysteine--tRNA ligase (Jannaschia sp. (strain CCS1)).